Here is a 466-residue protein sequence, read N- to C-terminus: UDP-N-acetylmuramoylalanine--D-glutamate ligase (466 aa).

115-121 (GTDGKTT) contacts ATP.

This sequence belongs to the MurCDEF family.

It is found in the cytoplasm. It catalyses the reaction UDP-N-acetyl-alpha-D-muramoyl-L-alanine + D-glutamate + ATP = UDP-N-acetyl-alpha-D-muramoyl-L-alanyl-D-glutamate + ADP + phosphate + H(+). The protein operates within cell wall biogenesis; peptidoglycan biosynthesis. Functionally, cell wall formation. Catalyzes the addition of glutamate to the nucleotide precursor UDP-N-acetylmuramoyl-L-alanine (UMA). This chain is UDP-N-acetylmuramoylalanine--D-glutamate ligase, found in Chlorobium phaeobacteroides (strain BS1).